The primary structure comprises 352 residues: tRNA-specific 2-thiouridylase MnmA (352 aa).

ATP-binding positions include 7–14 (GLSGGVDS) and Leu-33. Cys-94 serves as the catalytic Nucleophile. The cysteines at positions 94 and 193 are disulfide-linked. Gly-119 is an ATP binding site. The segment at 143–145 (KDQ) is interaction with tRNA. Cys-193 acts as the Cysteine persulfide intermediate in catalysis. An interaction with tRNA region spans residues 298–299 (RY).

It belongs to the MnmA/TRMU family.

The protein localises to the cytoplasm. The enzyme catalyses S-sulfanyl-L-cysteinyl-[protein] + uridine(34) in tRNA + AH2 + ATP = 2-thiouridine(34) in tRNA + L-cysteinyl-[protein] + A + AMP + diphosphate + H(+). In terms of biological role, catalyzes the 2-thiolation of uridine at the wobble position (U34) of tRNA, leading to the formation of s(2)U34. The protein is tRNA-specific 2-thiouridylase MnmA of Nostoc sp. (strain PCC 7120 / SAG 25.82 / UTEX 2576).